Here is a 219-residue protein sequence, read N- to C-terminus: Virginiamycin A acetyltransferase (219 aa).

The active site involves His87.

The protein belongs to the transferase hexapeptide repeat family.

Its function is as follows. Inactivates the A compounds of virginiamycin-like antibiotics, thus providing resistance to these antibiotics. This chain is Virginiamycin A acetyltransferase (vat), found in Staphylococcus aureus.